The chain runs to 177 residues: Translation initiation factor IF-3 (177 aa).

It belongs to the IF-3 family. As to quaternary structure, monomer.

Its subcellular location is the cytoplasm. Its function is as follows. IF-3 binds to the 30S ribosomal subunit and shifts the equilibrium between 70S ribosomes and their 50S and 30S subunits in favor of the free subunits, thus enhancing the availability of 30S subunits on which protein synthesis initiation begins. The polypeptide is Translation initiation factor IF-3 (Synechocystis sp. (strain ATCC 27184 / PCC 6803 / Kazusa)).